The chain runs to 210 residues: Molybdenum cofactor guanylyltransferase (210 aa).

Residues 14 to 16, Lys-27, Asn-55, Asp-73, and Asp-108 each bind GTP; that span reads LAG. Asp-108 serves as a coordination point for Mg(2+).

Belongs to the MobA family. Monomer. Mg(2+) is required as a cofactor.

Its subcellular location is the cytoplasm. It catalyses the reaction Mo-molybdopterin + GTP + H(+) = Mo-molybdopterin guanine dinucleotide + diphosphate. Its function is as follows. Transfers a GMP moiety from GTP to Mo-molybdopterin (Mo-MPT) cofactor (Moco or molybdenum cofactor) to form Mo-molybdopterin guanine dinucleotide (Mo-MGD) cofactor. This is Molybdenum cofactor guanylyltransferase from Rhodopseudomonas palustris (strain BisB5).